The sequence spans 566 residues: Putative UDP-glucuronate:xylan alpha-glucuronosyltransferase 5 (566 aa).

The helical; Signal-anchor for type II membrane protein transmembrane segment at 17-37 threads the bilayer; that stretch reads LILISLSFLGLLLNFKPLFLL. Residues Asp-372 and Asp-374 each contribute to the Mn(2+) site. Substrate is bound by residues 372 to 374, 401 to 403, 428 to 432, and 475 to 480; these read DAD, NSG, NGGDQ, and HYLGLK. Residue His-475 participates in Mn(2+) binding.

Belongs to the glycosyltransferase 8 family. Glycogenin subfamily. Mn(2+) is required as a cofactor.

It localises to the golgi apparatus membrane. Functionally, may be involved in the substitutions of the xylan backbone in stem glucuronoxylan. In Arabidopsis thaliana (Mouse-ear cress), this protein is Putative UDP-glucuronate:xylan alpha-glucuronosyltransferase 5 (GUX5).